Reading from the N-terminus, the 232-residue chain is 7-cyano-7-deazaguanine synthase (232 aa).

ATP is bound at residue 8 to 18; the sequence is FSGGQDSTTCL. The Zn(2+) site is built by Cys-189, Cys-198, Cys-201, and Cys-204.

It belongs to the QueC family. Zn(2+) serves as cofactor.

It catalyses the reaction 7-carboxy-7-deazaguanine + NH4(+) + ATP = 7-cyano-7-deazaguanine + ADP + phosphate + H2O + H(+). It functions in the pathway purine metabolism; 7-cyano-7-deazaguanine biosynthesis. In terms of biological role, catalyzes the ATP-dependent conversion of 7-carboxy-7-deazaguanine (CDG) to 7-cyano-7-deazaguanine (preQ(0)). The polypeptide is 7-cyano-7-deazaguanine synthase (Yersinia enterocolitica serotype O:8 / biotype 1B (strain NCTC 13174 / 8081)).